Reading from the N-terminus, the 440-residue chain is NADH-quinone oxidoreductase subunit D (440 aa).

This sequence belongs to the complex I 49 kDa subunit family. NDH-1 is composed of 14 different subunits. Subunits NuoB, C, D, E, F, and G constitute the peripheral sector of the complex.

The protein localises to the cell membrane. It catalyses the reaction a quinone + NADH + 5 H(+)(in) = a quinol + NAD(+) + 4 H(+)(out). In terms of biological role, NDH-1 shuttles electrons from NADH, via FMN and iron-sulfur (Fe-S) centers, to quinones in the respiratory chain. The immediate electron acceptor for the enzyme in this species is believed to be a menaquinone. Couples the redox reaction to proton translocation (for every two electrons transferred, four hydrogen ions are translocated across the cytoplasmic membrane), and thus conserves the redox energy in a proton gradient. The chain is NADH-quinone oxidoreductase subunit D from Mycobacterium bovis (strain ATCC BAA-935 / AF2122/97).